Reading from the N-terminus, the 74-residue chain is Antimicrobial peptide AcrAP1 (74 aa).

An N-terminal signal peptide occupies residues 1–22 (MEIKYLLTVFLVLLIVSDHCQA). At K40 the chain carries Lysine amide. A propeptide spanning residues 46–74 (DLDGQIDRFRNFRKRDAELEELLSKLPIY) is cleaved from the precursor.

The protein belongs to the non-disulfide-bridged peptide (NDBP) superfamily. Short antimicrobial peptide (group 4) family. As to expression, expressed by the venom gland.

The protein resides in the secreted. The protein localises to the target cell membrane. Its function is as follows. Has antimicrobial activity against the Gram-positive bacteria S.aureus (MIC=8 uM) and the yeast C.albicans (MIC=16 uM). Causes hemolysis on horse erythrocytes (64 uM for 100% hemolysis). Minimum bactericidal concentrations have also been tested against S.aureus and is four-fold higher (MBC=32 uM). This Androctonus crassicauda (Arabian fat-tailed scorpion) protein is Antimicrobial peptide AcrAP1.